The chain runs to 145 residues: uncharacterized protein (145 aa).

The ACT domain maps to 78–145; the sequence is KLQIVAKDRI…DVVEKISILW (68 aa).

This is an uncharacterized protein from Methanocaldococcus jannaschii (strain ATCC 43067 / DSM 2661 / JAL-1 / JCM 10045 / NBRC 100440) (Methanococcus jannaschii).